The sequence spans 351 residues: MHQSLTQQRSSDMSLPDSMGAFNRRKRNSIYVTVTLLIVSVLILTVGLAATTRTQNVTVGGYYPGVILGFGSFLGIIGSNLIENKRQMLVASIVFISFGVIAAFCCAIVDGVFAARHIDLKPLYANRCHYVPKTSQKEAEEVITSSSKITPSTRALRNLTQAVKEVNCPQLSRGLCTPRIRGNTCFCCDLYNCGNRVEITGGYYEYIDVSSCQDIIHLYHLLWSATILNIVGLFLGIITAAVLGGFKDMNPTRPALNCSVENAHPTVSYYARPQVASYNTYYHSPPHLPPYSAYDFQHSGVFPSSPPSGLSDEQEPQSPSPSPSYMWSSSAPPRYSPPYYPPFEKPPPYSP.

4 helical membrane-spanning segments follow: residues 30–50 (IYVT…GLAA), 57–77 (VTVG…LGII), 89–109 (LVAS…CAIV), and 226–246 (TILN…LGGF). Residues 302–331 (FPSSPPSGLSDEQEPQSPSPSPSYMWSSSA) are disordered.

The protein belongs to the TMEM255 family.

The protein resides in the membrane. This chain is Transmembrane protein 255A (Tmem255a), found in Rattus norvegicus (Rat).